Consider the following 92-residue polypeptide: uncharacterized protein (92 aa).

This is an uncharacterized protein from Schizosaccharomyces pombe (strain 972 / ATCC 24843) (Fission yeast).